A 336-amino-acid polypeptide reads, in one-letter code: Inositol 2-dehydrogenase (336 aa).

The protein belongs to the Gfo/Idh/MocA family. As to quaternary structure, homotetramer.

The catalysed reaction is myo-inositol + NAD(+) = scyllo-inosose + NADH + H(+). Functionally, involved in the oxidation of myo-inositol (MI) to 2-keto-myo-inositol (2KMI or 2-inosose). This is Inositol 2-dehydrogenase from Pseudomonas savastanoi pv. phaseolicola (strain 1448A / Race 6) (Pseudomonas syringae pv. phaseolicola (strain 1448A / Race 6)).